Consider the following 213-residue polypeptide: CDP-diacylglycerol--inositol 3-phosphatidyltransferase (213 aa).

Residues 1-5 (MPEEN) are Cytoplasmic-facing. The helical transmembrane segment at 6–26 (IFLFVPNLIGYARIVFAIISF) threads the bilayer. A topological domain (lumenal) is located at residue Y27. A helical membrane pass occupies residues 28–48 (FMPCCPFTASSFYLLSGLLDA). Mg(2+) is bound by residues D47 and D50. The Cytoplasmic segment spans residues 49-73 (FDGHAARALNQGTRFGAMLDMLTDR). The a CDP-1,2-diacyl-sn-glycerol site is built by G51, R55, and T61. Positions 68 and 72 each coordinate Mg(2+). D72 serves as the catalytic Proton acceptor. The helical transmembrane segment at 74–94 (CATMCLLVNLALLYPRATLLF) threads the bilayer. Position 95 (Q95) is a topological domain, lumenal. A helical transmembrane segment spans residues 96-116 (LSMSLDVASHWLHLHSSVVRG). At 117 to 139 (SESHKMIDLSGNPVLRIYYTSRP) the chain is on the cytoplasmic side. A helical membrane pass occupies residues 140 to 160 (ALFTLCAGNELFYCLLYLFNF). Residues 161–174 (SEGPLVGSVGLFRM) are Lumenal-facing. The helical transmembrane segment at 175–195 (GLWITAPIALLKSIISVIHLV) threads the bilayer. Topologically, residues 196 to 213 (TAARNMAALDAADRAKKK) are cytoplasmic.

Belongs to the CDP-alcohol phosphatidyltransferase class-I family. Mn(2+) serves as cofactor. Mg(2+) is required as a cofactor. As to expression, detected in liver (at protein level). Widely expressed. Highly expressed in the brain and kidney; lower levels in heart, spleen, lung, liver, skeletal muscle and testis.

The protein resides in the endoplasmic reticulum membrane. The protein localises to the cell membrane. It catalyses the reaction a CDP-1,2-diacyl-sn-glycerol + myo-inositol = a 1,2-diacyl-sn-glycero-3-phospho-(1D-myo-inositol) + CMP + H(+). In terms of biological role, catalyzes the biosynthesis of phosphatidylinositol (PtdIns) as well as PtdIns:inositol exchange reaction. May thus act to reduce an excessive cellular PtdIns content. The exchange activity is due to the reverse reaction of PtdIns synthase and is dependent on CMP, which is tightly bound to the enzyme. This is CDP-diacylglycerol--inositol 3-phosphatidyltransferase from Rattus norvegicus (Rat).